The chain runs to 347 residues: Phenylalanine--tRNA ligase alpha subunit (347 aa).

Positions 83–111 (QNLSGGDDSGADPTFDPTLPGTRPSLGHI) are disordered. A Mg(2+)-binding site is contributed by E274.

The protein belongs to the class-II aminoacyl-tRNA synthetase family. Phe-tRNA synthetase alpha subunit type 1 subfamily. As to quaternary structure, tetramer of two alpha and two beta subunits. Requires Mg(2+) as cofactor.

Its subcellular location is the cytoplasm. The catalysed reaction is tRNA(Phe) + L-phenylalanine + ATP = L-phenylalanyl-tRNA(Phe) + AMP + diphosphate + H(+). This is Phenylalanine--tRNA ligase alpha subunit from Rhodopirellula baltica (strain DSM 10527 / NCIMB 13988 / SH1).